A 197-amino-acid chain; its full sequence is Translation machinery-associated protein 22 (197 aa).

One can recognise an SUI1 domain in the interval 102–173 (VQIKRVERNK…DVKEWLLEVY (72 aa)).

This sequence belongs to the DENR family. In terms of assembly, interacts with the 40S ribosomal subunit.

It localises to the cytoplasm. The sequence is that of Translation machinery-associated protein 22 (tma22) from Aspergillus niger (strain ATCC MYA-4892 / CBS 513.88 / FGSC A1513).